The sequence spans 453 residues: UDP-N-acetylmuramoylalanine--D-glutamate ligase (453 aa).

119-125 contacts ATP; the sequence is GSNGKTT.

The protein belongs to the MurCDEF family.

The protein resides in the cytoplasm. The enzyme catalyses UDP-N-acetyl-alpha-D-muramoyl-L-alanine + D-glutamate + ATP = UDP-N-acetyl-alpha-D-muramoyl-L-alanyl-D-glutamate + ADP + phosphate + H(+). It functions in the pathway cell wall biogenesis; peptidoglycan biosynthesis. Cell wall formation. Catalyzes the addition of glutamate to the nucleotide precursor UDP-N-acetylmuramoyl-L-alanine (UMA). This Streptococcus uberis (strain ATCC BAA-854 / 0140J) protein is UDP-N-acetylmuramoylalanine--D-glutamate ligase.